The primary structure comprises 234 residues: Demethylmenaquinone methyltransferase (234 aa).

Residues T62, D80, 100–101, and S117 contribute to the S-adenosyl-L-methionine site; that span reads DA.

It belongs to the class I-like SAM-binding methyltransferase superfamily. MenG/UbiE family.

The catalysed reaction is a 2-demethylmenaquinol + S-adenosyl-L-methionine = a menaquinol + S-adenosyl-L-homocysteine + H(+). It participates in quinol/quinone metabolism; menaquinone biosynthesis; menaquinol from 1,4-dihydroxy-2-naphthoate: step 2/2. Its function is as follows. Methyltransferase required for the conversion of demethylmenaquinol (DMKH2) to menaquinol (MKH2). This is Demethylmenaquinone methyltransferase from Mycobacterium bovis (strain ATCC BAA-935 / AF2122/97).